A 305-amino-acid polypeptide reads, in one-letter code: MKKIIFMGTPSYATCILKALVENENFKLVALFTQPDKAVGRKQILTPSDTKAFLSQNYPSIPIFTPSSLKDENIIREIKDLNPDFIVVAAYGKILPKAILDLVPCVNLHASLLPKYRGASPIQSAILNKDEKSGVCTMLMEEGLDTGAILESLECDIKDKNSSEVFELLANLAAKLILTTLLNFDKITPKKQEESLATLCRKIKKEDGLINLQNARELYQKYLAFTPWPGVFLENGLKFLELELVDELKQNARMGEILELEKESFLLACKQGVLRIKKLQESGKKALDGRTYLNGKRLKSEDSLC.

111-114 (SLLP) is a (6S)-5,6,7,8-tetrahydrofolate binding site.

The protein belongs to the Fmt family.

It carries out the reaction L-methionyl-tRNA(fMet) + (6R)-10-formyltetrahydrofolate = N-formyl-L-methionyl-tRNA(fMet) + (6S)-5,6,7,8-tetrahydrofolate + H(+). Its function is as follows. Attaches a formyl group to the free amino group of methionyl-tRNA(fMet). The formyl group appears to play a dual role in the initiator identity of N-formylmethionyl-tRNA by promoting its recognition by IF2 and preventing the misappropriation of this tRNA by the elongation apparatus. The chain is Methionyl-tRNA formyltransferase from Campylobacter jejuni subsp. jejuni serotype O:23/36 (strain 81-176).